Consider the following 159-residue polypeptide: Carbohydrate sulfotransferase 15 (159 aa).

At 1–159 (SGTTDFYRRI…YQPHNERLVK (159 aa)) the chain is on the lumenal side. N-linked (GlcNAc...) asparagine glycosylation is found at asparagine 42 and asparagine 112.

The protein belongs to the sulfotransferase 1 family. A divalent metal cation is required as a cofactor. It depends on glutathione as a cofactor.

It is found in the golgi apparatus membrane. The catalysed reaction is dermatan 4'-sulfate + n 3'-phosphoadenylyl sulfate = dermatan 4',6'-bissulfate + n adenosine 3',5'-bisphosphate + n H(+). It carries out the reaction chondroitin 4'-sulfate + n 3'-phosphoadenylyl sulfate = chondroitin 4',6'-bissulfate + n adenosine 3',5'-bisphosphate + n H(+). Its function is as follows. Sulfotransferase that transfers sulfate from 3'-phosphoadenosine 5'-phosphosulfate (PAPS) to the C-6 hydroxyl group of the GalNAc 4-sulfate residue of chondroitin sulfate A and forms chondroitin sulfate E containing GlcA-GalNAc(4,6-SO(4)) repeating units. The chain is Carbohydrate sulfotransferase 15 (GALNAC4S6ST) from Nototodarus sloanii (Wellington flying squid).